Here is a 959-residue protein sequence, read N- to C-terminus: Protein SEY1 homolog 1 (959 aa).

Residues 1–767 (MQESDVFHNQ…ELAAITVHSK (767 aa)) are Cytoplasmic-facing. The stretch at 9–86 (NQLRVEMLKK…EEEKKEKENY (78 aa)) forms a coiled coil. Positions 62–81 (EEKENMKVEEEEIKEEEEKK) are disordered. The GB1/RHD3-type G domain occupies 123 to 340 (GFNYNMLSIL…NQNTYFRPIY (218 aa)). Residue 133–140 (GPQNSGKS) participates in GTP binding. Residues 768–788 (TPMWLILLIAFLSFDNIVYVF) form a helical membrane-spanning segment. At 789–791 (KSP) the chain is on the lumenal side. The chain crosses the membrane as a helical span at residues 792-812 (TLLALTLIIIGIIYSLNKIGY). Topologically, residues 813-959 (AYLIDSVISY…LNKIKEANEF (147 aa)) are cytoplasmic. Residues 849 to 868 (EAPKRKRPQKKTQDDKPKSS) are disordered.

The protein belongs to the TRAFAC class dynamin-like GTPase superfamily. GB1/RHD3 GTPase family. RHD3 subfamily.

The protein resides in the endoplasmic reticulum membrane. In terms of biological role, probable GTP-binding protein that may be involved in cell development. The sequence is that of Protein SEY1 homolog 1 from Entamoeba histolytica (strain ATCC 30459 / HM-1:IMSS / ABRM).